Consider the following 228-residue polypeptide: Large ribosomal subunit protein bL25 (228 aa).

The disordered stretch occupies residues 1 to 24 (MATVMELKATARPKSGKGAARAER).

Belongs to the bacterial ribosomal protein bL25 family. CTC subfamily. Part of the 50S ribosomal subunit; part of the 5S rRNA/L5/L18/L25 subcomplex. Contacts the 5S rRNA. Binds to the 5S rRNA independently of L5 and L18.

Functionally, this is one of the proteins that binds to the 5S RNA in the ribosome where it forms part of the central protuberance. The polypeptide is Large ribosomal subunit protein bL25 (Nitrobacter winogradskyi (strain ATCC 25391 / DSM 10237 / CIP 104748 / NCIMB 11846 / Nb-255)).